A 124-amino-acid polypeptide reads, in one-letter code: Small ribosomal subunit protein bS6 (124 aa).

The tract at residues 96 to 124 is disordered; that stretch reads ETGPSPMMKEVQREEAKKAAAAQPAEAQA. Residues 114–124 are compositionally biased toward low complexity; sequence AAAAQPAEAQA.

It belongs to the bacterial ribosomal protein bS6 family.

In terms of biological role, binds together with bS18 to 16S ribosomal RNA. The polypeptide is Small ribosomal subunit protein bS6 (Burkholderia orbicola (strain AU 1054)).